Consider the following 149-residue polypeptide: Large ribosomal subunit protein bL9 (149 aa).

It belongs to the bacterial ribosomal protein bL9 family.

Functionally, binds to the 23S rRNA. The polypeptide is Large ribosomal subunit protein bL9 (Clostridioides difficile (strain 630) (Peptoclostridium difficile)).